We begin with the raw amino-acid sequence, 228 residues long: Ribonuclease H (228 aa).

The 141-residue stretch at 2–142 (GPMRTIVYAD…ADRLATLGRR (141 aa)) folds into the RNase H type-1 domain. Residues aspartate 11, glutamate 49, aspartate 71, and aspartate 134 each contribute to the Mg(2+) site.

It belongs to the RNase H family. As to quaternary structure, monomer. Mg(2+) is required as a cofactor.

It localises to the cytoplasm. It carries out the reaction Endonucleolytic cleavage to 5'-phosphomonoester.. Its function is as follows. Endonuclease that specifically degrades the RNA of RNA-DNA hybrids. This Methylorubrum extorquens (strain PA1) (Methylobacterium extorquens) protein is Ribonuclease H.